A 148-amino-acid chain; its full sequence is Large ribosomal subunit protein uL22 (148 aa).

Belongs to the universal ribosomal protein uL22 family. Part of the 50S ribosomal subunit.

Its function is as follows. This protein binds specifically to 23S rRNA; its binding is stimulated by other ribosomal proteins, e.g. L4, L17, and L20. It is important during the early stages of 50S assembly. It makes multiple contacts with different domains of the 23S rRNA in the assembled 50S subunit and ribosome. Functionally, the globular domain of the protein is located near the polypeptide exit tunnel on the outside of the subunit, while an extended beta-hairpin is found that lines the wall of the exit tunnel in the center of the 70S ribosome. In Thermosipho africanus (strain TCF52B), this protein is Large ribosomal subunit protein uL22.